The sequence spans 54 residues: Large ribosomal subunit protein uL15 (54 aa).

Positions 1-30 (MPSRLRXTRKLRGHVSHGHGRIGKHRKHPG) are enriched in basic residues. The tract at residues 1–42 (MPSRLRXTRKLRGHVSHGHGRIGKHRKHPGGRGNAGGMHHHR) is disordered. The residue at position 39 (H39) is a (3S)-3-hydroxyhistidine. Position 47 is an N6-acetyllysine (K47).

Belongs to the universal ribosomal protein uL15 family. In terms of assembly, component of the large ribosomal subunit. In terms of processing, hydroxylated on His-39 by MINA.

It is found in the cytoplasm. Component of the large ribosomal subunit. The ribosome is a large ribonucleoprotein complex responsible for the synthesis of proteins in the cell. The polypeptide is Large ribosomal subunit protein uL15 (RPL27A) (Sus scrofa (Pig)).